The primary structure comprises 243 residues: 2,3-bisphosphoglycerate-dependent phosphoglycerate mutase (243 aa).

Residues 8-15 (RHGQSEWN), 21-22 (TG), Arg-60, 87-90 (ERHY), Lys-98, 114-115 (RR), and 183-184 (GN) contribute to the substrate site. The active-site Tele-phosphohistidine intermediate is His-9. The active-site Proton donor/acceptor is Glu-87.

It belongs to the phosphoglycerate mutase family. BPG-dependent PGAM subfamily. In terms of assembly, homodimer.

It catalyses the reaction (2R)-2-phosphoglycerate = (2R)-3-phosphoglycerate. It participates in carbohydrate degradation; glycolysis; pyruvate from D-glyceraldehyde 3-phosphate: step 3/5. Its function is as follows. Catalyzes the interconversion of 2-phosphoglycerate and 3-phosphoglycerate. The protein is 2,3-bisphosphoglycerate-dependent phosphoglycerate mutase of Maricaulis maris (strain MCS10) (Caulobacter maris).